We begin with the raw amino-acid sequence, 186 residues long: Threonylcarbamoyl-AMP synthase (186 aa).

Positions 5 to 186 (TQSINDAVKC…DAITGEILRL (182 aa)) constitute a YrdC-like domain.

Belongs to the SUA5 family. TsaC subfamily.

Its subcellular location is the cytoplasm. It catalyses the reaction L-threonine + hydrogencarbonate + ATP = L-threonylcarbamoyladenylate + diphosphate + H2O. Required for the formation of a threonylcarbamoyl group on adenosine at position 37 (t(6)A37) in tRNAs that read codons beginning with adenine. Catalyzes the conversion of L-threonine, HCO(3)(-)/CO(2) and ATP to give threonylcarbamoyl-AMP (TC-AMP) as the acyladenylate intermediate, with the release of diphosphate. In Coxiella burnetii (strain RSA 331 / Henzerling II), this protein is Threonylcarbamoyl-AMP synthase.